A 241-amino-acid polypeptide reads, in one-letter code: Phosphoribosylformylglycinamidine synthase subunit PurQ (241 aa).

The 236-residue stretch at 6 to 241 folds into the Glutamine amidotransferase type-1 domain; the sequence is NVGIVVFPGS…QSLLLASAFA (236 aa). Cys90 (nucleophile) is an active-site residue. Catalysis depends on residues His207 and Glu209.

In terms of assembly, part of the FGAM synthase complex composed of 1 PurL, 1 PurQ and 2 PurS subunits.

Its subcellular location is the cytoplasm. The enzyme catalyses N(2)-formyl-N(1)-(5-phospho-beta-D-ribosyl)glycinamide + L-glutamine + ATP + H2O = 2-formamido-N(1)-(5-O-phospho-beta-D-ribosyl)acetamidine + L-glutamate + ADP + phosphate + H(+). It catalyses the reaction L-glutamine + H2O = L-glutamate + NH4(+). The protein operates within purine metabolism; IMP biosynthesis via de novo pathway; 5-amino-1-(5-phospho-D-ribosyl)imidazole from N(2)-formyl-N(1)-(5-phospho-D-ribosyl)glycinamide: step 1/2. In terms of biological role, part of the phosphoribosylformylglycinamidine synthase complex involved in the purines biosynthetic pathway. Catalyzes the ATP-dependent conversion of formylglycinamide ribonucleotide (FGAR) and glutamine to yield formylglycinamidine ribonucleotide (FGAM) and glutamate. The FGAM synthase complex is composed of three subunits. PurQ produces an ammonia molecule by converting glutamine to glutamate. PurL transfers the ammonia molecule to FGAR to form FGAM in an ATP-dependent manner. PurS interacts with PurQ and PurL and is thought to assist in the transfer of the ammonia molecule from PurQ to PurL. This is Phosphoribosylformylglycinamidine synthase subunit PurQ from Thermosynechococcus vestitus (strain NIES-2133 / IAM M-273 / BP-1).